A 326-amino-acid chain; its full sequence is Protein FAM50 homolog (326 aa).

The tract at residues 76-112 is disordered; it reads EISNRDLQVARGASSSTSLAKDSQEAREKEEHVAKHT. Residues 97–109 show a composition bias toward basic and acidic residues; the sequence is DSQEAREKEEHVA.

It belongs to the FAM50 family.

This is Protein FAM50 homolog from Caenorhabditis briggsae.